A 226-amino-acid polypeptide reads, in one-letter code: UPF0177 protein YbdJ (226 aa).

5 helical membrane passes run 16 to 36 (LLLL…LGIF), 43 to 63 (FAFN…IVIA), 81 to 101 (LLFI…AHHL), 169 to 189 (FAWV…ISLV), and 206 to 226 (LHSS…FWVF).

This sequence belongs to the UPF0177 family.

The protein localises to the cell membrane. In Lactococcus lactis subsp. lactis (strain IL1403) (Streptococcus lactis), this protein is UPF0177 protein YbdJ (ybdJ).